The following is an 853-amino-acid chain: DNA topoisomerase 1 (853 aa).

The region spanning 3-136 is the Toprim domain; it reads KSLVIVESPV…KFRRVVFNEI (134 aa). Residues glutamate 9 and aspartate 105 each coordinate Mg(2+). Residues 152-565 form the Topo IA-type catalytic domain; sequence NMNRVYSQQA…SFFDNFSQQL (414 aa). The segment at 186 to 191 is interaction with DNA; sequence SAGRVQ. Catalysis depends on tyrosine 313, which acts as the O-(5'-phospho-DNA)-tyrosine intermediate. C4-type zinc fingers lie at residues 589–621, 649–676, and 699–724; these read CSLCNKKMGIKTAVTGVFLSCLGYNSEPNEKRC, CKKCNLVMDVYLINENLKIFICINNPSC, and CEKCKNDMLFKTGRFGNFFMCINDTC.

This sequence belongs to the type IA topoisomerase family. Monomer. Mg(2+) serves as cofactor.

It catalyses the reaction ATP-independent breakage of single-stranded DNA, followed by passage and rejoining.. Releases the supercoiling and torsional tension of DNA, which is introduced during the DNA replication and transcription, by transiently cleaving and rejoining one strand of the DNA duplex. Introduces a single-strand break via transesterification at a target site in duplex DNA. The scissile phosphodiester is attacked by the catalytic tyrosine of the enzyme, resulting in the formation of a DNA-(5'-phosphotyrosyl)-enzyme intermediate and the expulsion of a 3'-OH DNA strand. The free DNA strand then undergoes passage around the unbroken strand, thus removing DNA supercoils. Finally, in the religation step, the DNA 3'-OH attacks the covalent intermediate to expel the active-site tyrosine and restore the DNA phosphodiester backbone. This Buchnera aphidicola subsp. Schizaphis graminum (strain Sg) protein is DNA topoisomerase 1.